Reading from the N-terminus, the 234-residue chain is Phosphoribosylaminoimidazole-succinocarboxamide synthase (234 aa).

It belongs to the SAICAR synthetase family.

It carries out the reaction 5-amino-1-(5-phospho-D-ribosyl)imidazole-4-carboxylate + L-aspartate + ATP = (2S)-2-[5-amino-1-(5-phospho-beta-D-ribosyl)imidazole-4-carboxamido]succinate + ADP + phosphate + 2 H(+). Its pathway is purine metabolism; IMP biosynthesis via de novo pathway; 5-amino-1-(5-phospho-D-ribosyl)imidazole-4-carboxamide from 5-amino-1-(5-phospho-D-ribosyl)imidazole-4-carboxylate: step 1/2. The protein is Phosphoribosylaminoimidazole-succinocarboxamide synthase of Streptococcus pyogenes serotype M1.